A 392-amino-acid chain; its full sequence is Transcription factor GATA-4 (392 aa).

A disordered region spans residues 75–113; it reads SSAYNPGTSHPPVSPRFTFSSSPPITAPSSREVSYSSPL. Over residues 91-113 the composition is skewed to polar residues; that stretch reads FTFSSSPPITAPSSREVSYSSPL. GATA-type zinc fingers lie at residues 184–208 and 238–262; these read CVNC…CNAC and CANC…CNAC. Disordered stretches follow at residues 279 to 339 and 359 to 392; these read KEGI…HSNS and MPSL…LVLA. A compositionally biased stretch (basic residues) spans 284-293; that stretch reads TRKRKPKNLS. Positions 302–316 are enriched in low complexity; sequence SGSDSLTPSTSSTNS. The segment covering 364–380 has biased composition (polar residues); it reads LSPQNHHSTFNPSPQAN.

As to expression, expressed at high levels in heart, small intestine, stomach, ovary, and liver. Found at much lower levels in lung, spleen, pancreas and skin.

The protein localises to the nucleus. Functionally, transcriptional activator that binds to the consensus sequence 5'-AGATAG-3'. Associated with cardiac specification and can regulate cardiac-specific transcription during embryogenesis. Activates the expression of cardiac MHC-alpha in vivo. The protein is Transcription factor GATA-4 (gata4) of Xenopus laevis (African clawed frog).